The chain runs to 348 residues: Phospho-2-dehydro-3-deoxyheptonate aldolase, Trp-sensitive (348 aa).

The protein belongs to the class-I DAHP synthase family.

It carries out the reaction D-erythrose 4-phosphate + phosphoenolpyruvate + H2O = 7-phospho-2-dehydro-3-deoxy-D-arabino-heptonate + phosphate. Its pathway is metabolic intermediate biosynthesis; chorismate biosynthesis; chorismate from D-erythrose 4-phosphate and phosphoenolpyruvate: step 1/7. In terms of biological role, stereospecific condensation of phosphoenolpyruvate (PEP) and D-erythrose-4-phosphate (E4P) giving rise to 3-deoxy-D-arabino-heptulosonate-7-phosphate (DAHP). This is Phospho-2-dehydro-3-deoxyheptonate aldolase, Trp-sensitive (aroH) from Buchnera aphidicola subsp. Baizongia pistaciae (strain Bp).